We begin with the raw amino-acid sequence, 134 residues long: Putative pre-16S rRNA nuclease (134 aa).

It belongs to the YqgF nuclease family.

It localises to the cytoplasm. Its function is as follows. Could be a nuclease involved in processing of the 5'-end of pre-16S rRNA. This Helicobacter pylori (strain G27) protein is Putative pre-16S rRNA nuclease.